The chain runs to 81 residues: Photosystem I iron-sulfur center (81 aa).

4Fe-4S ferredoxin-type domains follow at residues 2 to 31 and 39 to 68; these read AHSVKIYDTCIGCTQCVRACPTDVLEMVPW and IASAPRTEDCVGCKRCESACPTDFLSVRVY. 8 residues coordinate [4Fe-4S] cluster: Cys11, Cys14, Cys17, Cys21, Cys48, Cys51, Cys54, and Cys58.

The eukaryotic PSI reaction center is composed of at least 11 subunits. It depends on [4Fe-4S] cluster as a cofactor.

The protein resides in the plastid. It localises to the chloroplast thylakoid membrane. The catalysed reaction is reduced [plastocyanin] + hnu + oxidized [2Fe-2S]-[ferredoxin] = oxidized [plastocyanin] + reduced [2Fe-2S]-[ferredoxin]. Apoprotein for the two 4Fe-4S centers FA and FB of photosystem I (PSI); essential for photochemical activity. FB is the terminal electron acceptor of PSI, donating electrons to ferredoxin. The C-terminus interacts with PsaA/B/D and helps assemble the protein into the PSI complex. Required for binding of PsaD and PsaE to PSI. PSI is a plastocyanin-ferredoxin oxidoreductase, converting photonic excitation into a charge separation, which transfers an electron from the donor P700 chlorophyll pair to the spectroscopically characterized acceptors A0, A1, FX, FA and FB in turn. In Chlorokybus atmophyticus (Soil alga), this protein is Photosystem I iron-sulfur center.